A 416-amino-acid chain; its full sequence is Muscle-specific homeobox protein tinman (416 aa).

Polar residues-rich tracts occupy residues 1 to 11 and 18 to 33; these read MLQHHQQQAQS and YTQS…ADAL. Disordered stretches follow at residues 1 to 33, 246 to 305, and 391 to 416; these read MLQH…ADAL, TASN…RKPR, and VMWP…MQHM. Positions 281–295 are enriched in low complexity; sequence NSISGNSNPGSNSGS. Positions 301–360 form a DNA-binding region, homeobox; it reads KRKPRVLFSQAQVLELECRFRLKKYLTGAEREIIAQKLNLSATQVKIWFQNRRYKSKRGD. Residues 397–416 are compositionally biased toward low complexity; sequence MQQSQQQQQHHAQQQQMQHM.

The protein localises to the nucleus. Its function is as follows. Required for the development of heart and visceral muscle; for the formation of somatic muscles. Has a crucial function in the early mesodermal subdivisions. In Drosophila melanogaster (Fruit fly), this protein is Muscle-specific homeobox protein tinman (tin).